A 246-amino-acid polypeptide reads, in one-letter code: E3 ubiquitin-protein ligase RNF182 (246 aa).

The segment at 22–70 adopts an RING-type zinc-finger fold; it reads CKICYNRYNLRQRKPKVLGCCHRVCAKCLYKLVDCGESPQCVIVCPFCR. A run of 2 helical transmembrane segments spans residues 184–204 and 211–231; these read VFVWLLGLLYFSSLPLGIYLL and LGVVFVSLVPSSLVILMIYGF.

Interacts with ATP6V0C.

The protein localises to the membrane. Its subcellular location is the cytoplasm. The catalysed reaction is S-ubiquitinyl-[E2 ubiquitin-conjugating enzyme]-L-cysteine + [acceptor protein]-L-lysine = [E2 ubiquitin-conjugating enzyme]-L-cysteine + N(6)-ubiquitinyl-[acceptor protein]-L-lysine.. Its pathway is protein modification; protein ubiquitination. Functionally, E3 ubiquitin-protein ligase that mediates the ubiquitination of atp6v0c and targets it to degradation via the ubiquitin-proteasome pathway. The protein is E3 ubiquitin-protein ligase RNF182 (rnf182) of Xenopus laevis (African clawed frog).